The following is a 259-amino-acid chain: Tryptophan synthase alpha chain (259 aa).

Catalysis depends on proton acceptor residues E52 and D63.

It belongs to the TrpA family. As to quaternary structure, tetramer of two alpha and two beta chains.

The enzyme catalyses (1S,2R)-1-C-(indol-3-yl)glycerol 3-phosphate + L-serine = D-glyceraldehyde 3-phosphate + L-tryptophan + H2O. It participates in amino-acid biosynthesis; L-tryptophan biosynthesis; L-tryptophan from chorismate: step 5/5. The alpha subunit is responsible for the aldol cleavage of indoleglycerol phosphate to indole and glyceraldehyde 3-phosphate. The protein is Tryptophan synthase alpha chain of Streptococcus gordonii (strain Challis / ATCC 35105 / BCRC 15272 / CH1 / DL1 / V288).